We begin with the raw amino-acid sequence, 356 residues long: Ubiquitin-conjugating enzyme E2 variant 3 (356 aa).

Residues 1-83 form a disordered region; sequence MSDQPGTSRP…LEDLHNYHRE (83 aa). Polar residues predominate over residues 18 to 32; it reads PTKTATRRRARPIAI. Over residues 63–76 the composition is skewed to basic and acidic residues; the sequence is QPRKTVPKNVPLED. In terms of domain architecture, UBC core spans 169 to 324; it reads DIITEFMNRS…AREFVMKMAG (156 aa).

It belongs to the ubiquitin-conjugating enzyme family. May interact with pmk-3. Expressed ubiquitously.

It localises to the nucleus. Its subcellular location is the cytoplasm. The protein localises to the cell projection. The protein resides in the dendrite. It is found in the axon. It localises to the cilium. Its function is as follows. Possible negative regulator of polyubiquitination. May modulate the activity of the p38 MAP kinase pnk-3. May have a role in axon termination and synaptic transmission at motor and mechanosensory neurons. Plays a role in intraflagellar transport in cilia and cilium length regulation. The protein is Ubiquitin-conjugating enzyme E2 variant 3 of Caenorhabditis elegans.